Here is a 284-residue protein sequence, read N- to C-terminus: Proteasome subunit beta 1 (284 aa).

The propeptide at 1-56 is removed in mature form; by autocatalysis; the sequence is MASHDSYTGRLPGAFMNPGTSSFTEFLASYNPDLLPGRHMTALAGGMPGNVEAPHA. Threonine 57 serves as the catalytic Nucleophile.

The protein belongs to the peptidase T1B family. As to quaternary structure, the 20S proteasome core is composed of 14 alpha and 14 beta subunits that assemble into four stacked heptameric rings, resulting in a barrel-shaped structure. The two inner rings, each composed of seven catalytic beta subunits, are sandwiched by two outer rings, each composed of seven alpha subunits. The catalytic chamber with the active sites is on the inside of the barrel. Has a gated structure, the ends of the cylinder being occluded by the N-termini of the alpha-subunits. Is capped by the proteasome-associated ATPase, ARC.

It is found in the cytoplasm. The enzyme catalyses Cleavage of peptide bonds with very broad specificity.. It participates in protein degradation; proteasomal Pup-dependent pathway. The formation of the proteasomal ATPase ARC-20S proteasome complex, likely via the docking of the C-termini of ARC into the intersubunit pockets in the alpha-rings, may trigger opening of the gate for substrate entry. Interconversion between the open-gate and close-gate conformations leads to a dynamic regulation of the 20S proteasome proteolysis activity. In terms of biological role, component of the proteasome core, a large protease complex with broad specificity involved in protein degradation. The protein is Proteasome subunit beta 1 of Thermomonospora curvata (strain ATCC 19995 / DSM 43183 / JCM 3096 / KCTC 9072 / NBRC 15933 / NCIMB 10081 / Henssen B9).